Here is a 457-residue protein sequence, read N- to C-terminus: Oxygen-independent coproporphyrinogen III oxidase (457 aa).

The region spanning 47–280 (RYPERPLSLY…QETIVSLTQA (234 aa)) is the Radical SAM core domain. S-adenosyl-L-methionine is bound at residue Tyr-56. Positions 62 and 66 each coordinate [4Fe-4S] cluster. An S-adenosyl-L-methionine-binding site is contributed by Phe-68. Cys-69 serves as a coordination point for [4Fe-4S] cluster. Residues Gly-112, 113 to 114 (GT), Glu-145, Gln-172, Arg-184, Asp-209, Ala-243, and Ile-329 each bind S-adenosyl-L-methionine.

Belongs to the anaerobic coproporphyrinogen-III oxidase family. In terms of assembly, monomer. Requires [4Fe-4S] cluster as cofactor.

It is found in the cytoplasm. It carries out the reaction coproporphyrinogen III + 2 S-adenosyl-L-methionine = protoporphyrinogen IX + 2 5'-deoxyadenosine + 2 L-methionine + 2 CO2. It functions in the pathway porphyrin-containing compound metabolism; protoporphyrin-IX biosynthesis; protoporphyrinogen-IX from coproporphyrinogen-III (AdoMet route): step 1/1. Functionally, involved in the heme biosynthesis. Catalyzes the anaerobic oxidative decarboxylation of propionate groups of rings A and B of coproporphyrinogen III to yield the vinyl groups in protoporphyrinogen IX. In Salmonella typhi, this protein is Oxygen-independent coproporphyrinogen III oxidase (hemN).